Here is a 497-residue protein sequence, read N- to C-terminus: Membrane-bound lytic murein transglycosylase F (497 aa).

The N-terminal stretch at 1 to 29 (MFFRPDFRPRCAKWLIATGLFLMLGACVE) is a signal peptide. The non-LT domain stretch occupies residues 30–267 (KPTTLERVKE…RLKDRYYGHV (238 aa)). Residues 268-497 (DVLGYVGAYT…PASSPEKPAL (230 aa)) form an LT domain region. Residue Glu-314 is part of the active site. Positions 464 to 497 (VADGNLHVPGVDKTQPPAPTAPVVPASSPEKPAL) are disordered. The span at 486–497 (VVPASSPEKPAL) shows a compositional bias: low complexity.

It in the N-terminal section; belongs to the bacterial solute-binding protein 3 family. This sequence in the C-terminal section; belongs to the transglycosylase Slt family.

It is found in the cell outer membrane. It carries out the reaction Exolytic cleavage of the (1-&gt;4)-beta-glycosidic linkage between N-acetylmuramic acid (MurNAc) and N-acetylglucosamine (GlcNAc) residues in peptidoglycan, from either the reducing or the non-reducing ends of the peptidoglycan chains, with concomitant formation of a 1,6-anhydrobond in the MurNAc residue.. Functionally, murein-degrading enzyme that degrades murein glycan strands and insoluble, high-molecular weight murein sacculi, with the concomitant formation of a 1,6-anhydromuramoyl product. Lytic transglycosylases (LTs) play an integral role in the metabolism of the peptidoglycan (PG) sacculus. Their lytic action creates space within the PG sacculus to allow for its expansion as well as for the insertion of various structures such as secretion systems and flagella. This Pseudomonas syringae pv. tomato (strain ATCC BAA-871 / DC3000) protein is Membrane-bound lytic murein transglycosylase F.